We begin with the raw amino-acid sequence, 138 residues long: Large ribosomal subunit protein bL19 (138 aa).

The protein belongs to the bacterial ribosomal protein bL19 family.

This protein is located at the 30S-50S ribosomal subunit interface and may play a role in the structure and function of the aminoacyl-tRNA binding site. The protein is Large ribosomal subunit protein bL19 of Leptospira interrogans serogroup Icterohaemorrhagiae serovar Lai (strain 56601).